The following is an 818-amino-acid chain: Myosin-A (818 aa).

Phosphoserine; by PKG is present on Ser19. The 675-residue stretch at 97–771 folds into the Myosin motor domain; the sequence is MSFGDIGLLN…GAKILTKIQR (675 aa). 191-198 is a binding site for ATP; that stretch reads GESGAGKT. The interval 661 to 671 is actin-binding; the sequence is PHFIRCIKPNE. The segment at 773–818 is tail; the sequence is KLVEWENCVSVIEAAILKHKYKQKVNKNIPSLLRVQAHIRKKMVAQ.

Belongs to the TRAFAC class myosin-kinesin ATPase superfamily. Myosin family. As to quaternary structure, component of the glideosome complex composed of GAP50, GAP45, MTIP and MyoA; the complex is formed during the late schizont stage and in merozoites. MyoA, MTIP and GAP45 probably form an initial complex in the cytoplasm which is then recruited to the outer face of the inner membrane complex via the interaction with GAP50. Interacts with ACT1.

The protein resides in the cell membrane. Functionally, myosins are actin-based motor molecules with ATPase activity. Unconventional myosins serve in intracellular movements. Their highly divergent tails are presumed to bind to membranous compartments, which would be moved relative to actin filaments. This Plasmodium falciparum (isolate 3D7) protein is Myosin-A.